The sequence spans 495 residues: Vacuolar-processing enzyme (495 aa).

Residues 1–32 form the signal peptide; the sequence is MALDRSIISKTTWYSVVLWMMVVLVRVHGAAA. N-linked (GlcNAc...) asparagine glycosylation is present at Asn-138. His-178 is a catalytic residue. Cys-220 (nucleophile) is an active-site residue. The cysteines at positions 253 and 267 are disulfide-linked. N-linked (GlcNAc...) asparagine glycosylation is found at Asn-320 and Asn-376. 2 disulfides stabilise this stretch: Cys-431–Cys-461 and Cys-443–Cys-478.

It belongs to the peptidase C13 family.

Its function is as follows. Asparagine-specific endopeptidase involved in the processing of vacuolar seed protein precursors into the mature forms. This chain is Vacuolar-processing enzyme, found in Glycine max (Soybean).